A 177-amino-acid polypeptide reads, in one-letter code: MPIKSRIRSIPDYPKKGIMFRDITTLIKDPVGFRLVIDSLTQRYLENGVDFDMIVGIEARGFIIGGALSYTLGKGFVPVRKPGKLPADVVSQEYELEYGSDKIEIHMDALEKGTRVLLVDDLLATGGTALAAAALVEKVGGVVAEMAFIVNLPDVGGEQKIRDKGYSIYSLTDFEGD.

Belongs to the purine/pyrimidine phosphoribosyltransferase family. Homodimer.

It localises to the cytoplasm. The catalysed reaction is AMP + diphosphate = 5-phospho-alpha-D-ribose 1-diphosphate + adenine. The protein operates within purine metabolism; AMP biosynthesis via salvage pathway; AMP from adenine: step 1/1. Its function is as follows. Catalyzes a salvage reaction resulting in the formation of AMP, that is energically less costly than de novo synthesis. This is Adenine phosphoribosyltransferase from Chlorobium limicola (strain DSM 245 / NBRC 103803 / 6330).